The primary structure comprises 561 residues: Acylcarnitine hydrolase (561 aa).

An N-terminal signal peptide occupies residues 1–26 (MTRNQLHNWLNAGFFGLLLLLIHVQG). Residues Cys-97 and Cys-125 are joined by a disulfide bond. Ser-230 functions as the Acyl-ester intermediate in the catalytic mechanism. A disulfide bridge connects residues Cys-282 and Cys-293. Residues Glu-347 and His-459 each act as charge relay system in the active site. The Prevents secretion from ER signature appears at 558–561 (HREL).

It belongs to the type-B carboxylesterase/lipase family. As to expression, detected in liver (at protein level).

Its subcellular location is the microsome. The protein localises to the endoplasmic reticulum. It catalyses the reaction an O-acyl-(R)-carnitine + H2O = (R)-carnitine + a fatty acid + H(+). It carries out the reaction all-trans-retinyl hexadecanoate + H2O = all-trans-retinol + hexadecanoate + H(+). Functionally, hydrolase with high activity towards palmitoylcarnitine. Is also active with p-nitrophenylacetate and alpha-naphthylacetate. May also hydrolyze retinyl esters. The protein is Acylcarnitine hydrolase of Mus musculus (Mouse).